Reading from the N-terminus, the 328-residue chain is Carbonic anhydrase-related protein 11 (328 aa).

The signal sequence occupies residues 1 to 23 (MGAAPRLSAPRVLVLWAALGAAA). Residues 33–303 (DWWSYKDNLQ…LAHRALRGNR (271 aa)) form the Alpha-carbonic anhydrase domain. Asn118 carries an N-linked (GlcNAc...) asparagine glycan. A disordered region spans residues 300–328 (RGNRDPRHPERRCRGPNYRLHVDDVPHGL). Over residues 319–328 (LHVDDVPHGL) the composition is skewed to basic and acidic residues.

Belongs to the alpha-carbonic anhydrase family.

The protein resides in the secreted. Functionally, does not have a catalytic activity. The polypeptide is Carbonic anhydrase-related protein 11 (CA11) (Ovis aries (Sheep)).